A 334-amino-acid chain; its full sequence is N-acetyl-gamma-glutamyl-phosphate reductase (334 aa).

Cys-154 is a catalytic residue.

It belongs to the NAGSA dehydrogenase family. Type 1 subfamily.

It is found in the cytoplasm. The catalysed reaction is N-acetyl-L-glutamate 5-semialdehyde + phosphate + NADP(+) = N-acetyl-L-glutamyl 5-phosphate + NADPH + H(+). It participates in amino-acid biosynthesis; L-arginine biosynthesis; N(2)-acetyl-L-ornithine from L-glutamate: step 3/4. Catalyzes the NADPH-dependent reduction of N-acetyl-5-glutamyl phosphate to yield N-acetyl-L-glutamate 5-semialdehyde. This is N-acetyl-gamma-glutamyl-phosphate reductase from Photorhabdus laumondii subsp. laumondii (strain DSM 15139 / CIP 105565 / TT01) (Photorhabdus luminescens subsp. laumondii).